We begin with the raw amino-acid sequence, 291 residues long: 4-diphosphocytidyl-2-C-methyl-D-erythritol kinase (291 aa).

Residue Lys-10 is part of the active site. 94 to 104 (PVSAGLAGGSS) is a binding site for ATP. Asp-136 is an active-site residue.

It belongs to the GHMP kinase family. IspE subfamily.

It carries out the reaction 4-CDP-2-C-methyl-D-erythritol + ATP = 4-CDP-2-C-methyl-D-erythritol 2-phosphate + ADP + H(+). It participates in isoprenoid biosynthesis; isopentenyl diphosphate biosynthesis via DXP pathway; isopentenyl diphosphate from 1-deoxy-D-xylulose 5-phosphate: step 3/6. Functionally, catalyzes the phosphorylation of the position 2 hydroxy group of 4-diphosphocytidyl-2C-methyl-D-erythritol. This chain is 4-diphosphocytidyl-2-C-methyl-D-erythritol kinase, found in Listeria innocua serovar 6a (strain ATCC BAA-680 / CLIP 11262).